The chain runs to 233 residues: uncharacterized protein (233 aa).

This sequence belongs to the LutC/YkgG family.

This is an uncharacterized protein from Neisseria meningitidis serogroup B (strain ATCC BAA-335 / MC58).